Reading from the N-terminus, the 230-residue chain is Protein-L-isoaspartate O-methyltransferase (230 aa).

The active site involves Ser68.

It belongs to the methyltransferase superfamily. L-isoaspartyl/D-aspartyl protein methyltransferase family.

The protein resides in the cytoplasm. It catalyses the reaction [protein]-L-isoaspartate + S-adenosyl-L-methionine = [protein]-L-isoaspartate alpha-methyl ester + S-adenosyl-L-homocysteine. Functionally, catalyzes the methyl esterification of L-isoaspartyl residues in peptides and proteins that result from spontaneous decomposition of normal L-aspartyl and L-asparaginyl residues. It plays a role in the repair and/or degradation of damaged proteins. The polypeptide is Protein-L-isoaspartate O-methyltransferase (Salinibacter ruber (strain DSM 13855 / M31)).